Here is a 253-residue protein sequence, read N- to C-terminus: Complement C1q subcomponent subunit B (253 aa).

A signal peptide spans 1 to 25 (MKTQWSEILTPLLLLLLGLLHVSWA). Gln26 carries the pyrrolidone carboxylic acid modification. Residues 29 to 112 (CTGSPGIPGV…GPRGPKGGSG (84 aa)) form the Collagen-like domain. The interval 29-114 (CTGSPGIPGV…RGPKGGSGDY (86 aa)) is disordered. A 4-hydroxyproline mark is found at Pro33, Pro36, Pro39, Pro51, and Pro54. 5-hydroxylysine occurs at positions 57 and 60. Pro63 carries the 4-hydroxyproline modification. Residues 68–77 (DHGELGEKGD) are compositionally biased toward basic and acidic residues. A 5-hydroxylysine modification is found at Lys75. Over residues 78–96 (AGIPGIPGKVGPKGPVGPK) the composition is skewed to low complexity. A 4-hydroxyproline mark is found at Pro81 and Pro84. 5-hydroxylysine is present on residues Lys90 and Lys96. 4-hydroxyproline is present on residues Pro99 and Pro102. Lys108 is subject to 5-hydroxylysine. One can recognise a C1q domain in the interval 115–253 (KATQKVAFSA…GFLLFPDMDV (139 aa)). Cys179 and Cys198 are joined by a disulfide. Residues Asp199, Tyr200, and Gln206 each contribute to the Ca(2+) site.

Core component of the complement C1 complex, a calcium-dependent complex composed of 1 molecule of the C1Q subcomplex, 2 molecules of C1R and 2 molecules of C1S. The C1Q subcomplex is composed 18 subunits: 3 chains of C1QA, C1QB, and C1QC trimerize to form 6 collagen-like triple helices connected to six globular ligand-recognition modules (C1q domain). Hydroxylated on lysine and proline residues. Hydroxylated lysine residues can be glycosylated. Human C1Q contains up to 68.3 hydroxylysine-galactosylglucose residues and up to 2.5 hydroxylysine-galactose per molecule. Total percentage hydroxylysine residues glycosylated is 86.4%. As to expression, highest levels in spleen, lung and brain. Weaker expression in kidney and liver. In the spleen, localized mainly to the red pulp, in cells mainly of monocyte-macrophage lineage. In white pulp, localized in specific dendritic cells such as those from the periarteriolar lymphatic sheath (PALS).

It is found in the secreted. Its subcellular location is the cell surface. Its activity is regulated as follows. The C1Q subcomplex is inhibited by sulfated molecules, such as triterpenoid sulfates, heparan sulfate, or chondroitin sulfates. Its function is as follows. Core component of the complement C1 complex, a multiprotein complex that initiates the classical pathway of the complement system, a cascade of proteins that leads to phagocytosis and breakdown of pathogens and signaling that strengthens the adaptive immune system. The classical complement pathway is initiated by the C1Q subcomplex of the C1 complex, which specifically binds IgG or IgM immunoglobulins complexed with antigens, forming antigen-antibody complexes on the surface of pathogens: C1QA, together with C1QB and C1QC, specifically recognizes and binds the Fc regions of IgG or IgM via its C1q domain. Immunoglobulin-binding activates the proenzyme C1R, which cleaves C1S, initiating the proteolytic cascade of the complement system. The C1Q subcomplex is activated by a hexamer of IgG complexed with antigens, while it is activated by a pentameric IgM. The C1Q subcomplex also recognizes and binds phosphatidylserine exposed on the surface of cells undergoing programmed cell death, possibly promoting activation of the complement system. The sequence is that of Complement C1q subcomponent subunit B from Rattus norvegicus (Rat).